We begin with the raw amino-acid sequence, 371 residues long: MSAFKPTIKRRESTKIYVGNVPVGGDAPIAVQSMTNTRTTDVEATVTQIKALERVGADIIRVSVPTMEAAEAFKLIKQQTKVPLVADIHFDYRIALKVAEYGVDCLRINPGNIGREDRIRAVVDCAKDKNIPIRIGVNAGSLERDLQEKYGEPTPEALLESALRHVEILDRLNFDQFKVSVKASDVFLAVESYRLLAKAIKQPLHLGITEAGGARAGAVKSAVGLGMLLAEGIGDTLRVSLAADPVEEIKVGFDILKSLRIRSRGINFIACPTCSRQEFDVIGTVNELEQRLEDIITPMDVSIIGCVVNGPGEALVSDLGVTGGNKKSGYYLNGERQKERFDNDDIVNQLEARIRSKVAMQENRIEVSPVE.

[4Fe-4S] cluster contacts are provided by cysteine 271, cysteine 274, cysteine 306, and glutamate 313.

The protein belongs to the IspG family. It depends on [4Fe-4S] cluster as a cofactor.

It catalyses the reaction (2E)-4-hydroxy-3-methylbut-2-enyl diphosphate + oxidized [flavodoxin] + H2O + 2 H(+) = 2-C-methyl-D-erythritol 2,4-cyclic diphosphate + reduced [flavodoxin]. It functions in the pathway isoprenoid biosynthesis; isopentenyl diphosphate biosynthesis via DXP pathway; isopentenyl diphosphate from 1-deoxy-D-xylulose 5-phosphate: step 5/6. Functionally, converts 2C-methyl-D-erythritol 2,4-cyclodiphosphate (ME-2,4cPP) into 1-hydroxy-2-methyl-2-(E)-butenyl 4-diphosphate. This chain is 4-hydroxy-3-methylbut-2-en-1-yl diphosphate synthase (flavodoxin), found in Actinobacillus succinogenes (strain ATCC 55618 / DSM 22257 / CCUG 43843 / 130Z).